A 700-amino-acid chain; its full sequence is MAQEVLTDLNKVRNIGIMAHIDAGKTTTTERILFYTGVNYKIGETHDGASTTDWMEQEKERGITITSAAVTCFWNNNQINIIDTPGHVDFTVEVERSLRVLDGAVAVFDGKEGVEPQSEQVWRQAAKYDVPRICFVNKMDKMGADFYFTVQTIIDRLGAKPLVLQLPIGAEDDFDGVVDLVEMKAVTWRGTVAIGAEPTIEEIPADLADKAAEYREKLLETVAESDEKLMEKYFAGEELSVEEIKGAIRKMTVNSELYPVLCGSAFKNKGVQPMLDAVIDYLPNPLDIGEVQGHALGNEEEVLTRKPSKEEPFSALAFKIASHPFFGKLTFVRVYSGRIDPGAQVMNATKGKKERIGKLFQMHANKENPVDEAVAGHIYAMIGLKDTTTGDTLCAQDAPIVLESMSFPDPVIQVSIEPKTKSDQEKLGTAIQKLAEEDPTFSVELDEETGQTVIGGMGELHLDILVDRMRREFKVEANVGKPQVAYRETITKKVEKHDYTHKKQTGGSGQFAKVIIALEPFVGEDGASYEFENKVSGGRIPREYIPSVDAGAQDAMQYGVLAGYPLVNLKLSLLDGAYHDVDSSEMAFKVAGSQALKEAARKAGPVILEPLMAVEVTTPEEYMGDVIGDLNSRRGQIQAMEERSGARVVKALVPLSEMFGYIGDLRSKTQGRANFSMVFDSYAEVPANVSKEIIAKATGE.

Residues 10-286 enclose the tr-type G domain; that stretch reads NKVRNIGIMA…AVIDYLPNPL (277 aa). Residues 19-26, 83-87, and 137-140 each bind GTP; these read AHIDAGKT, DTPGH, and NKMD.

It belongs to the TRAFAC class translation factor GTPase superfamily. Classic translation factor GTPase family. EF-G/EF-2 subfamily.

It localises to the cytoplasm. In terms of biological role, catalyzes the GTP-dependent ribosomal translocation step during translation elongation. During this step, the ribosome changes from the pre-translocational (PRE) to the post-translocational (POST) state as the newly formed A-site-bound peptidyl-tRNA and P-site-bound deacylated tRNA move to the P and E sites, respectively. Catalyzes the coordinated movement of the two tRNA molecules, the mRNA and conformational changes in the ribosome. This chain is Elongation factor G, found in Rhodococcus opacus (strain B4).